Here is a 172-residue protein sequence, read N- to C-terminus: Disulfide bond formation protein B (172 aa).

Residues M1–Q11 are Cytoplasmic-facing. Residues F12–Y28 traverse the membrane as a helical segment. The Periplasmic portion of the chain corresponds to V29–I46. C38 and C41 are joined by a disulfide. Residues A47–P63 traverse the membrane as a helical segment. Topologically, residues R64 to K70 are cytoplasmic. The helical transmembrane segment at V71–A88 threads the bilayer. The Periplasmic portion of the chain corresponds to R89 to M145. An intrachain disulfide couples C104 to C131. The helical transmembrane segment at W146–K164 threads the bilayer. At V165–H172 the chain is on the cytoplasmic side.

It belongs to the DsbB family.

The protein resides in the cell inner membrane. In terms of biological role, required for disulfide bond formation in some periplasmic proteins. Acts by oxidizing the DsbA protein. The polypeptide is Disulfide bond formation protein B (Xanthomonas axonopodis pv. citri (strain 306)).